The chain runs to 88 residues: Small ribosomal subunit protein uS15 (88 aa).

The protein belongs to the universal ribosomal protein uS15 family. As to quaternary structure, part of the 30S ribosomal subunit. Forms a bridge to the 50S subunit in the 70S ribosome, contacting the 23S rRNA.

Its function is as follows. One of the primary rRNA binding proteins, it binds directly to 16S rRNA where it helps nucleate assembly of the platform of the 30S subunit by binding and bridging several RNA helices of the 16S rRNA. Forms an intersubunit bridge (bridge B4) with the 23S rRNA of the 50S subunit in the ribosome. The protein is Small ribosomal subunit protein uS15 of Borreliella burgdorferi (strain ATCC 35210 / DSM 4680 / CIP 102532 / B31) (Borrelia burgdorferi).